Reading from the N-terminus, the 175-residue chain is MTLQITETYERLRASHISRWGIVQTTYPQNIAEHMWRVWLLCRDWGAAAGMPQHTVRQACEFALVHDLAEIRTGDAPTPHKTPELKELLAGIEAQIVPEVAELEATMAPEARELWKFCDTAEAVLFLKVNGLGAHAYDVQHLLMEQMKRRLMDSVLDVEVQDELMFQFERTIKKT.

Arg19 is a dATP binding site. Co(2+)-binding residues include His34, His66, Asp67, Glu70, Asp75, and Asp119.

Belongs to the Caudovirales dATP triphosphohydrolase family. As to quaternary structure, homohexamer. Co(2+) is required as a cofactor. It depends on Zn(2+) as a cofactor.

The catalysed reaction is dATP + H2O = 2'-deoxyadenosine + triphosphate + H(+). The enzyme catalyses dADP + H2O = 2'-deoxyadenosine + diphosphate. It carries out the reaction dAMP + H2O = 2'-deoxyadenosine + phosphate. Catalyzes the hydrolysis of dATP, dADP and dAMP into dA. This step is essential for Z-genome synthesis (containing aminoadenine instead of adenine). Specifically removes dATP and its precursor dADP from the nucleotide pool of the host, preventing the incorporation of A into the phage genome and favoring the integration of the Z-base into the viral genome. The polypeptide is dATP triphosphohydrolase (datZ) (Cyanophage S-2L (Cyanobacteria phage S-2L)).